We begin with the raw amino-acid sequence, 212 residues long: Pyridoxine/pyridoxamine 5'-phosphate oxidase 1 (212 aa).

Substrate is bound by residues 8–11 and lysine 66; that span reads RTDY. FMN-binding positions include 61–66, 76–77, lysine 83, and glutamine 105; these read RIVLLK and FT. Residues tyrosine 123, arginine 127, and serine 131 each contribute to the substrate site. FMN is bound by residues 140-141 and tryptophan 184; that span reads QS. 190–192 serves as a coordination point for substrate; that stretch reads RLH. Position 194 (arginine 194) interacts with FMN.

It belongs to the pyridoxamine 5'-phosphate oxidase family. In terms of assembly, homodimer. The cofactor is FMN.

It catalyses the reaction pyridoxamine 5'-phosphate + O2 + H2O = pyridoxal 5'-phosphate + H2O2 + NH4(+). The enzyme catalyses pyridoxine 5'-phosphate + O2 = pyridoxal 5'-phosphate + H2O2. It participates in cofactor metabolism; pyridoxal 5'-phosphate salvage; pyridoxal 5'-phosphate from pyridoxamine 5'-phosphate: step 1/1. The protein operates within cofactor metabolism; pyridoxal 5'-phosphate salvage; pyridoxal 5'-phosphate from pyridoxine 5'-phosphate: step 1/1. Functionally, catalyzes the oxidation of either pyridoxine 5'-phosphate (PNP) or pyridoxamine 5'-phosphate (PMP) into pyridoxal 5'-phosphate (PLP). The polypeptide is Pyridoxine/pyridoxamine 5'-phosphate oxidase 1 (Ralstonia nicotianae (strain ATCC BAA-1114 / GMI1000) (Ralstonia solanacearum)).